A 1115-amino-acid chain; its full sequence is Carbamoyl phosphate synthase large chain (1115 aa).

The segment at 1–407 is carboxyphosphate synthetic domain; it reads MPRRTDLHHV…ALGKVMRSLE (407 aa). ATP is bound by residues Arg-134, Arg-174, Gly-180, Gly-181, Glu-213, Ile-215, Glu-220, Gly-246, Val-247, His-248, Gln-290, and Glu-304. The ATP-grasp 1 domain maps to 138-333; that stretch reads KDIVAKAGGE…IAKIAAKLAI (196 aa). Gln-290, Glu-304, and Asn-306 together coordinate Mg(2+). Residues Gln-290, Glu-304, and Asn-306 each coordinate Mn(2+). The segment at 408-559 is oligomerization domain; it reads TTRAGFWTAP…ELDPAAETEV (152 aa). The segment at 560–965 is carbamoyl phosphate synthetic domain; sequence APQTERPKVL…AFAKSQTAAY (406 aa). The ATP-grasp 2 domain maps to 693–884; that stretch reads GDLLSAAGLP…LAKACARIML (192 aa). Residues Arg-729, Arg-768, Leu-770, Glu-775, Gly-800, Ile-801, His-802, Ser-803, Gln-843, and Glu-855 each coordinate ATP. Gln-843, Glu-855, and Asn-857 together coordinate Mg(2+). Mn(2+) contacts are provided by Gln-843, Glu-855, and Asn-857. The region spanning 966–1113 is the MGS-like domain; the sequence is GSLPAQGTVF…QELHRVIGGV (148 aa). The allosteric domain stretch occupies residues 966–1115; sequence GSLPAQGTVF…LHRVIGGVER (150 aa).

It belongs to the CarB family. Composed of two chains; the small (or glutamine) chain promotes the hydrolysis of glutamine to ammonia, which is used by the large (or ammonia) chain to synthesize carbamoyl phosphate. Tetramer of heterodimers (alpha,beta)4. Requires Mg(2+) as cofactor. It depends on Mn(2+) as a cofactor.

It carries out the reaction hydrogencarbonate + L-glutamine + 2 ATP + H2O = carbamoyl phosphate + L-glutamate + 2 ADP + phosphate + 2 H(+). It catalyses the reaction hydrogencarbonate + NH4(+) + 2 ATP = carbamoyl phosphate + 2 ADP + phosphate + 2 H(+). The protein operates within amino-acid biosynthesis; L-arginine biosynthesis; carbamoyl phosphate from bicarbonate: step 1/1. It participates in pyrimidine metabolism; UMP biosynthesis via de novo pathway; (S)-dihydroorotate from bicarbonate: step 1/3. Large subunit of the glutamine-dependent carbamoyl phosphate synthetase (CPSase). CPSase catalyzes the formation of carbamoyl phosphate from the ammonia moiety of glutamine, carbonate, and phosphate donated by ATP, constituting the first step of 2 biosynthetic pathways, one leading to arginine and/or urea and the other to pyrimidine nucleotides. The large subunit (synthetase) binds the substrates ammonia (free or transferred from glutamine from the small subunit), hydrogencarbonate and ATP and carries out an ATP-coupled ligase reaction, activating hydrogencarbonate by forming carboxy phosphate which reacts with ammonia to form carbamoyl phosphate. The protein is Carbamoyl phosphate synthase large chain of Mycobacterium tuberculosis (strain CDC 1551 / Oshkosh).